A 90-amino-acid chain; its full sequence is Small ribosomal subunit protein uS17m (90 aa).

This sequence belongs to the universal ribosomal protein uS17 family. As to quaternary structure, component of the mitochondrial small ribosomal subunit (mt-SSU). Mature yeast 74S mitochondrial ribosomes consist of a small (37S) and a large (54S) subunit. The 37S small subunit contains a 15S ribosomal RNA (15S mt-rRNA) and at least 32 different proteins. The 54S large subunit contains a 21S rRNA (21S mt-rRNA) and at least 45 different proteins.

Its subcellular location is the mitochondrion. Component of the mitochondrial ribosome (mitoribosome), a dedicated translation machinery responsible for the synthesis of mitochondrial genome-encoded proteins, including at least some of the essential transmembrane subunits of the mitochondrial respiratory chain. The mitoribosomes are attached to the mitochondrial inner membrane and translation products are cotranslationally integrated into the membrane. uS17m may have a meiosis-specific role as it accumulates during the middle stage of sporulation. The chain is Small ribosomal subunit protein uS17m from Schizosaccharomyces pombe (strain 972 / ATCC 24843) (Fission yeast).